The chain runs to 647 residues: Pumilio homolog 3 (647 aa).

Basic residues predominate over residues 1-10 (MEVKGKKKIT). The interval 1 to 123 (MEVKGKKKIT…KKKKELKQNR (123 aa)) is disordered. Residue Lys33 is modified to N6-acetyllysine. A compositionally biased stretch (basic residues) spans 59-68 (PGKKRVKQFK). Basic and acidic residues predominate over residues 93–123 (FQPDGKSDESAAKKPKWDDFKKKKKELKQNR). Positions 105–117 (KKPKWDDFKKKKK) match the Nuclear localization signal motif. The region spanning 142-509 (ESLRRKDCDK…VVLDKSVCVL (368 aa)) is the PUM-HD domain. Pumilio repeat units lie at residues 176 to 211 (HDST…LSKA), 212 to 247 (KYSR…MLRH), 248 to 276 (SEAS…ELYG), 288 to 324 (PTLE…VIKH), 325 to 360 (SLVH…LAHT), 361 to 396 (HDGA…IANG), 397 to 434 (QYSH…IVND), 435 to 503 (KYGR…VVLD), 504 to 550 (KSVC…IAEH), 551 to 595 (PAGH…WASI), and 596 to 635 (NRGA…KSTS).

In terms of assembly, interacts with PARP1 (via catalytic domain).

Its subcellular location is the nucleus. It is found in the nucleolus. It localises to the nucleoplasm. The protein localises to the chromosome. Its function is as follows. Inhibits the poly(ADP-ribosyl)ation activity of PARP1 and the degradation of PARP1 by CASP3 following genotoxic stress. Binds to double-stranded RNA or DNA without sequence specificity. Involved in development of the eye and of primordial germ cells. The sequence is that of Pumilio homolog 3 from Rattus norvegicus (Rat).